We begin with the raw amino-acid sequence, 973 residues long: Sodium/calcium exchanger 1 (973 aa).

A signal peptide spans 1–35; sequence MYNMRRLSLSPTFSMGFHLLVTVSLLFSHVDHVIA. At 36-74 the chain is on the extracellular side; the sequence is ETEMEGEGNETGECTGSYYCKKGVILPIWEPQDPSFGDK. N-linked (GlcNAc...) asparagine glycosylation occurs at N44. The helical transmembrane segment at 75–95 threads the bilayer; the sequence is IARATVYFVAMVYMFLGVSII. At 96 to 136 the chain is on the cytoplasmic side; that stretch reads ADRFMSSIEVITSQEKEITIKKPNGETTKTTVRIWNETVSN. A helical membrane pass occupies residues 137–157; sequence LTLMALGSSAPEILLSVIEVC. One copy of the Alpha-1 repeat lies at 141-181; it reads ALGSSAPEILLSVIEVCGHNFTAGDLGPSTIVGSAAFNMFI. The Extracellular segment spans residues 158 to 170; it reads GHNFTAGDLGPST. A glycan (N-linked (GlcNAc...) asparagine) is linked at N160. The chain crosses the membrane as a helical span at residues 171-191; that stretch reads IVGSAAFNMFIIIALCVYVVP. Over 192 to 204 the chain is Cytoplasmic; sequence DGETRKIKHLRVF. The helical transmembrane segment at 205-225 threads the bilayer; that stretch reads FVTAAWSIFAYTWLYIILSVI. At 226–231 the chain is on the extracellular side; it reads SPGVVE. The helical transmembrane segment at 232-252 threads the bilayer; that stretch reads VWEGLLTFFFFPICVVFAWVA. Residues 253-800 are Cytoplasmic-facing; sequence DRRLLFYKYV…FVPPTEYWNG (548 aa). Positions 254-273 are putative calmodulin-binding region; it reads RRLLFYKYVYKRYRAGKQRG. A phosphoserine mark is found at S285 and S392. 2 consecutive Calx-beta domains span residues 396–496 and 527–627; these read VNTE…VHLS and ATVT…LEIG. Ca(2+) is bound by residues E420, D456, D481, D482, I484, E486, E489, D533, D534, D535, E551, D587, D613, E614, E615, and E718. A helical transmembrane segment spans residues 801 to 821; it reads WACFIVSILMIGLLTAFIGDL. Residues 822 to 824 are Extracellular-facing; that stretch reads ASH. The helical transmembrane segment at 825–845 threads the bilayer; sequence FGCTIGLKDSVTAVVFVALGT. One copy of the Alpha-2 repeat lies at 842 to 878; that stretch reads ALGTSVPDTFASKVAATQDQYADASIGNVTGSNAVNV. At 846–874 the chain is on the cytoplasmic side; sequence SVPDTFASKVAATQDQYADASIGNVTGSN. A helical membrane pass occupies residues 875–895; the sequence is AVNVFLGIGVAWSIAAIYHAA. Over 896–906 the chain is Extracellular; that stretch reads NGEQFKVSPGT. The helical transmembrane segment at 907–927 threads the bilayer; sequence LAFSVTLFTIFAFINVGVLLY. Over 928–944 the chain is Cytoplasmic; it reads RRRPEIGGELGGPRTAK. Residues 945–965 traverse the membrane as a helical segment; sequence LLTSCLFVLLWLLYIFFSSLE. Over 966 to 973 the chain is Extracellular; that stretch reads AYCHIKGF.

It belongs to the Ca(2+):cation antiporter (CaCA) (TC 2.A.19) family. SLC8 subfamily. In terms of tissue distribution, detected primarily in heart and at lower levels in brain. Expressed in cardiac sarcolemma, brain, kidney, liver, pancreas, skeletal muscle, placenta and lung.

It localises to the cell membrane. It carries out the reaction Ca(2+)(in) + 3 Na(+)(out) = Ca(2+)(out) + 3 Na(+)(in). With respect to regulation, activated by micromolar levels of Ca(2+). In terms of biological role, mediates the exchange of one Ca(2+) ion against three to four Na(+) ions across the cell membrane, and thereby contributes to the regulation of cytoplasmic Ca(2+) levels and Ca(2+)-dependent cellular processes. Contributes to Ca(2+) transport during excitation-contraction coupling in muscle. In a first phase, voltage-gated channels mediate the rapid increase of cytoplasmic Ca(2+) levels due to release of Ca(2+) stores from the endoplasmic reticulum. SLC8A1 mediates the export of Ca(2+) from the cell during the next phase, so that cytoplasmic Ca(2+) levels rapidly return to baseline. Required for normal embryonic heart development and the onset of heart contractions. This is Sodium/calcium exchanger 1 (SLC8A1) from Homo sapiens (Human).